The following is a 253-amino-acid chain: 2-C-methyl-D-erythritol 4-phosphate cytidylyltransferase (253 aa).

Belongs to the IspD/TarI cytidylyltransferase family. IspD subfamily.

It catalyses the reaction 2-C-methyl-D-erythritol 4-phosphate + CTP + H(+) = 4-CDP-2-C-methyl-D-erythritol + diphosphate. It participates in isoprenoid biosynthesis; isopentenyl diphosphate biosynthesis via DXP pathway; isopentenyl diphosphate from 1-deoxy-D-xylulose 5-phosphate: step 2/6. In terms of biological role, catalyzes the formation of 4-diphosphocytidyl-2-C-methyl-D-erythritol from CTP and 2-C-methyl-D-erythritol 4-phosphate (MEP). This Chlorobium chlorochromatii (strain CaD3) protein is 2-C-methyl-D-erythritol 4-phosphate cytidylyltransferase.